A 391-amino-acid polypeptide reads, in one-letter code: Fructose-bisphosphate aldolase 3, chloroplastic (391 aa).

The transit peptide at 1-40 (MASASFVKPNTLSSPWIGQRSFAHTSASSSPPPRVSFAIR) directs the protein to the chloroplast. Position 88 (R88) interacts with substrate. Position 150 is a phosphoserine (S150). K178 is a binding site for substrate. At S208 the chain carries Phosphoserine. The active-site Proton acceptor is E218. K260 (schiff-base intermediate with dihydroxyacetone-P) is an active-site residue. Residue 302 to 304 (SGG) participates in substrate binding. K387 carries the N6,N6,N6-trimethyllysine modification.

The protein belongs to the class I fructose-bisphosphate aldolase family. Homotetramer. In terms of processing, can be trimethylated at Lys-387 by LSMT-L, but the trimethylation has no effect in vitro. S-glutathionylated. As to expression, expressed in roots, and at low levels in rosettes leaves, cauline leaves, stems and flowers.

The protein resides in the plastid. The protein localises to the chloroplast. It is found in the plastoglobule. The enzyme catalyses beta-D-fructose 1,6-bisphosphate = D-glyceraldehyde 3-phosphate + dihydroxyacetone phosphate. Its pathway is carbohydrate degradation; glycolysis; D-glyceraldehyde 3-phosphate and glycerone phosphate from D-glucose: step 4/4. In terms of biological role, plays a key role in glycolysis and gluconeogenesis. The polypeptide is Fructose-bisphosphate aldolase 3, chloroplastic (Arabidopsis thaliana (Mouse-ear cress)).